A 337-amino-acid polypeptide reads, in one-letter code: N-acetyl-gamma-glutamyl-phosphate reductase (337 aa).

The active site involves Cys145.

It belongs to the NAGSA dehydrogenase family. Type 1 subfamily.

The protein localises to the cytoplasm. The enzyme catalyses N-acetyl-L-glutamate 5-semialdehyde + phosphate + NADP(+) = N-acetyl-L-glutamyl 5-phosphate + NADPH + H(+). The protein operates within amino-acid biosynthesis; L-arginine biosynthesis; N(2)-acetyl-L-ornithine from L-glutamate: step 3/4. Its function is as follows. Catalyzes the NADPH-dependent reduction of N-acetyl-5-glutamyl phosphate to yield N-acetyl-L-glutamate 5-semialdehyde. The polypeptide is N-acetyl-gamma-glutamyl-phosphate reductase (Methanosarcina barkeri (strain Fusaro / DSM 804)).